Consider the following 197-residue polypeptide: Holliday junction branch migration complex subunit RuvA (197 aa).

The segment at 1–64 (MIGRLSGKLI…EDAHLLYGFA (64 aa)) is domain I. The segment at 65–143 (SKEERQTFRQ…TGGNLTVPGG (79 aa)) is domain II. Residues 143-147 (GLPFA) form a flexible linker region. A domain III region spans residues 148-197 (ATPDEKSDIVNALLALGYNEKEAAAATKSLPADVTVSEGVRLALKSLMKV).

This sequence belongs to the RuvA family. In terms of assembly, homotetramer. Forms an RuvA(8)-RuvB(12)-Holliday junction (HJ) complex. HJ DNA is sandwiched between 2 RuvA tetramers; dsDNA enters through RuvA and exits via RuvB. An RuvB hexamer assembles on each DNA strand where it exits the tetramer. Each RuvB hexamer is contacted by two RuvA subunits (via domain III) on 2 adjacent RuvB subunits; this complex drives branch migration. In the full resolvosome a probable DNA-RuvA(4)-RuvB(12)-RuvC(2) complex forms which resolves the HJ.

It localises to the cytoplasm. In terms of biological role, the RuvA-RuvB-RuvC complex processes Holliday junction (HJ) DNA during genetic recombination and DNA repair, while the RuvA-RuvB complex plays an important role in the rescue of blocked DNA replication forks via replication fork reversal (RFR). RuvA specifically binds to HJ cruciform DNA, conferring on it an open structure. The RuvB hexamer acts as an ATP-dependent pump, pulling dsDNA into and through the RuvAB complex. HJ branch migration allows RuvC to scan DNA until it finds its consensus sequence, where it cleaves and resolves the cruciform DNA. The polypeptide is Holliday junction branch migration complex subunit RuvA (Chromobacterium violaceum (strain ATCC 12472 / DSM 30191 / JCM 1249 / CCUG 213 / NBRC 12614 / NCIMB 9131 / NCTC 9757 / MK)).